Consider the following 523-residue polypeptide: GMP synthase [glutamine-hydrolyzing] (523 aa).

One can recognise a Glutamine amidotransferase type-1 domain in the interval 8–205; that stretch reads KILILDFGSQ…VVDICGCETN (198 aa). Cys-85 (nucleophile) is an active-site residue. Active-site residues include His-179 and Glu-181. The region spanning 206–398 is the GMPS ATP-PPase domain; that stretch reads WTAENIIEDA…LGLPAEMLNR (193 aa). 233–239 contacts ATP; the sequence is SGGVDSS.

As to quaternary structure, homodimer.

It catalyses the reaction XMP + L-glutamine + ATP + H2O = GMP + L-glutamate + AMP + diphosphate + 2 H(+). The protein operates within purine metabolism; GMP biosynthesis; GMP from XMP (L-Gln route): step 1/1. Functionally, catalyzes the synthesis of GMP from XMP. The chain is GMP synthase [glutamine-hydrolyzing] from Histophilus somni (strain 129Pt) (Haemophilus somnus).